We begin with the raw amino-acid sequence, 105 residues long: Platelet factor 4 (105 aa).

An N-terminal signal peptide occupies residues 1 to 29 (MSVAAVFRGLRPSPELLLLGLLFLPAVVA). The O-linked (GalNAc...) threonine glycan is linked to threonine 31. Disulfide bonds link cysteine 44–cysteine 71 and cysteine 46–cysteine 87. Serine 61 is subject to Phosphoserine. 96–102 (KKVIKKI) provides a ligand contact to heparin.

It belongs to the intercrine alpha (chemokine CxC) family. In terms of assembly, homotetramer. Interacts with TNFAIP6 (via Link domain). Interacts with CCR1. Interacts with CXCR3. Interacts with THBD; this interaction enhances generation of activated protein C.

Its subcellular location is the secreted. Its function is as follows. Chemokine released during platelet aggregation that plays a role in different biological processes including hematopoiesis, cell proliferation, differentiation, and activation. Acts via different functional receptors including CCR1, CXCR3A or CXCR3B. Upon interaction with CXCR3A receptor, induces activated T-lymphocytes migration mediated via downstream Ras/extracellular signal-regulated kinase (ERK) signaling. Neutralizes the anticoagulant effect of heparin by binding more strongly to heparin than to the chondroitin-4-sulfate chains of the carrier molecule. Plays a role in the inhibition of hematopoiesis and in the maintenance of hematopoietic stem cell (HSC) quiescence. Chemotactic for neutrophils and monocytes via CCR1. Inhibits endothelial cell proliferation. In cooperation with toll-like receptor 8/TLR8, induces chromatin remodeling and activates inflammatory gene expression via the TBK1-IRF5 axis. In addition, induces myofibroblast differentiation and collagen synthesis in different precursor cells, including endothelial cells, by stimulating endothelial-to-mesenchymal transition. Interacts with thrombomodulin/THBD to enhance the activation of protein C and thus potentiates its anticoagulant activity. The chain is Platelet factor 4 (Pf4) from Mus musculus (Mouse).